The sequence spans 142 residues: Small ribosomal subunit protein uS12 (142 aa).

A disordered region spans residues 1–30 (MGKTHGMGAARKLKSHRRTQRWADKSYKKS). Residues 11-20 (RKLKSHRRTQ) show a composition bias toward basic residues. Basic and acidic residues predominate over residues 21–30 (RWADKSYKKS). Pro61 is modified (hydroxyproline).

It belongs to the universal ribosomal protein uS12 family.

The polypeptide is Small ribosomal subunit protein uS12 (RPS23) (Euphorbia esula (Leafy spurge)).